Reading from the N-terminus, the 112-residue chain is MCQNIFQKIIKGIIPSKIIYQDKEITAFHDINPIAPIHILVVPNLLIKSLNEINENNKHILGNMLYISIKIAKKFKIDKNGYRLIINCNQHGRQEIQHLHLHLLGGKKLNKI.

In terms of domain architecture, HIT spans 5–112 (IFQKIIKGII…LLGGKKLNKI (108 aa)). The short motif at 98–102 (HLHLH) is the Histidine triad motif element.

This is an uncharacterized protein from Buchnera aphidicola subsp. Baizongia pistaciae (strain Bp).